A 376-amino-acid chain; its full sequence is Ribonuclease D (376 aa).

Residues 8 to 176 (IQWIRDDASL…VYLALDARLS (169 aa)) enclose the 3'-5' exonuclease domain. Residues 214–294 (RPQQLAVLRE…AEAARLPQSE (81 aa)) form the HRDC domain.

This sequence belongs to the RNase D family. A divalent metal cation serves as cofactor.

The protein resides in the cytoplasm. The catalysed reaction is Exonucleolytic cleavage that removes extra residues from the 3'-terminus of tRNA to produce 5'-mononucleotides.. Its function is as follows. Exonuclease involved in the 3' processing of various precursor tRNAs. Initiates hydrolysis at the 3'-terminus of an RNA molecule and releases 5'-mononucleotides. The chain is Ribonuclease D from Pseudomonas paraeruginosa (strain DSM 24068 / PA7) (Pseudomonas aeruginosa (strain PA7)).